The chain runs to 186 residues: Coiled-coil domain-containing protein ORF13 (186 aa).

Coiled-coil stretches lie at residues 2–30 and 63–85; these read GIKEKEIELETLKREIAQAEASLEQDFIK and LREKLTDKVSKAMDLSDEIQRDK.

In Helicobacter pylori (strain 35A), this protein is Coiled-coil domain-containing protein ORF13.